The primary structure comprises 431 residues: 5-methylthioadenosine/S-adenosylhomocysteine deaminase (431 aa).

His66 and His68 together coordinate Zn(2+). The substrate site is built by Glu95, Arg147, and His185. Zn(2+) is bound at residue His212. Substrate-binding residues include Glu215 and Asp300. Position 300 (Asp300) interacts with Zn(2+).

Belongs to the metallo-dependent hydrolases superfamily. MTA/SAH deaminase family. Requires Zn(2+) as cofactor.

The enzyme catalyses S-adenosyl-L-homocysteine + H2O + H(+) = S-inosyl-L-homocysteine + NH4(+). It catalyses the reaction S-methyl-5'-thioadenosine + H2O + H(+) = S-methyl-5'-thioinosine + NH4(+). Functionally, catalyzes the deamination of 5-methylthioadenosine and S-adenosyl-L-homocysteine into 5-methylthioinosine and S-inosyl-L-homocysteine, respectively. Is also able to deaminate adenosine. This Desulfitobacterium hafniense (strain DSM 10664 / DCB-2) protein is 5-methylthioadenosine/S-adenosylhomocysteine deaminase.